Here is a 154-residue protein sequence, read N- to C-terminus: SsrA-binding protein (154 aa).

The disordered stretch occupies residues 134-154; the sequence is DKREDIKKRDQERELSRRFKN.

This sequence belongs to the SmpB family.

It localises to the cytoplasm. In terms of biological role, required for rescue of stalled ribosomes mediated by trans-translation. Binds to transfer-messenger RNA (tmRNA), required for stable association of tmRNA with ribosomes. tmRNA and SmpB together mimic tRNA shape, replacing the anticodon stem-loop with SmpB. tmRNA is encoded by the ssrA gene; the 2 termini fold to resemble tRNA(Ala) and it encodes a 'tag peptide', a short internal open reading frame. During trans-translation Ala-aminoacylated tmRNA acts like a tRNA, entering the A-site of stalled ribosomes, displacing the stalled mRNA. The ribosome then switches to translate the ORF on the tmRNA; the nascent peptide is terminated with the 'tag peptide' encoded by the tmRNA and targeted for degradation. The ribosome is freed to recommence translation, which seems to be the essential function of trans-translation. The protein is SsrA-binding protein of Leuconostoc mesenteroides subsp. mesenteroides (strain ATCC 8293 / DSM 20343 / BCRC 11652 / CCM 1803 / JCM 6124 / NCDO 523 / NBRC 100496 / NCIMB 8023 / NCTC 12954 / NRRL B-1118 / 37Y).